The chain runs to 149 residues: Urease accessory protein UreE (149 aa).

It belongs to the UreE family.

The protein resides in the cytoplasm. In terms of biological role, involved in urease metallocenter assembly. Binds nickel. Probably functions as a nickel donor during metallocenter assembly. The protein is Urease accessory protein UreE of Ureaplasma urealyticum serovar 10 (strain ATCC 33699 / Western).